Reading from the N-terminus, the 81-residue chain is Cytotoxin 4N (81 aa).

The signal sequence occupies residues M1–T21. 4 disulfides stabilise this stretch: C24/C42, C35/C59, C63/C74, and C75/C80.

This sequence belongs to the three-finger toxin family. Short-chain subfamily. Type IA cytotoxin sub-subfamily. As to quaternary structure, monomer in solution; Homodimer and oligomer in the presence of negatively charged lipids forming a pore with a size ranging between 20 and 30 Angstroms. In terms of tissue distribution, expressed by the venom gland.

It is found in the secreted. The protein localises to the target cell membrane. Functionally, shows cytolytic activity on many different cells by forming pore in lipid membranes. In vivo, increases heart rate or kills the animal by cardiac arrest. In addition, it binds to heparin with high affinity, interacts with Kv channel-interacting protein 1 (KCNIP1) in a calcium-independent manner, and binds to integrin alpha-V/beta-3 (ITGAV/ITGB3) with moderate affinity. The protein is Cytotoxin 4N of Naja atra (Chinese cobra).